A 150-amino-acid chain; its full sequence is Large ribosomal subunit protein uL15 (150 aa).

It belongs to the universal ribosomal protein uL15 family. In terms of assembly, part of the 50S ribosomal subunit.

Its function is as follows. Binds to the 23S rRNA. The protein is Large ribosomal subunit protein uL15 of Rickettsia prowazekii (strain Madrid E).